The following is a 142-amino-acid chain: Transcriptional regulator MraZ (142 aa).

2 SpoVT-AbrB domains span residues 5–47 and 76–119; these read THTP…PTET and ASDT…DATE.

It belongs to the MraZ family. In terms of assembly, forms oligomers.

The protein localises to the cytoplasm. It localises to the nucleoid. The sequence is that of Transcriptional regulator MraZ from Cutibacterium acnes (strain DSM 16379 / KPA171202) (Propionibacterium acnes).